Consider the following 320-residue polypeptide: Adenosine receptor A3 (320 aa).

Topologically, residues 1 to 16 (MKANNTTTSALWLQIT) are extracellular. Residues Asn4 and Asn5 are each glycosylated (N-linked (GlcNAc...) asparagine). The helical transmembrane segment at 17 to 39 (YITMEAAIGLCAVVGNMLVIWVV) threads the bilayer. The Cytoplasmic segment spans residues 40 to 50 (KLNRTLRTTTF). A helical transmembrane segment spans residues 51–74 (YFIVSLALADIAVGVLVIPLAIAV). The Extracellular segment spans residues 75-86 (SLEVQMHFYACL). A disulfide bond links Cys85 and Cys168. A helical membrane pass occupies residues 87 to 108 (FMSCVLLVFTHASIMSLLAIAV). Residues 109–128 (DRYLRVKLTVRYRTVTTQRR) are Cytoplasmic-facing. The chain crosses the membrane as a helical span at residues 129 to 150 (IWLFLGLCWLVSFLVGLTPMFG). Residues 151–179 (WNRKVTLELSQNSSTLSCHFRSVVGLDYM) are Extracellular-facing. The helical transmembrane segment at 180-200 (VFFSFITWILIPLVVMCIIYL) threads the bilayer. Over 201–233 (DIFYIIRNKLSQNLTGFRETRAFYGREFKTAKS) the chain is Cytoplasmic. The helical transmembrane segment at 234–257 (LFLVLFLFALCWLPLSIINFVSYF) threads the bilayer. The Extracellular portion of the chain corresponds to 258-263 (NVKIPE). Residues 264 to 286 (IAMCLGILLSHANSMMNPIVYAC) form a helical membrane-spanning segment. Residues 287–320 (KIKKFKETYFVILRACRLCQTSDSLDSNLEQTTE) lie on the Cytoplasmic side of the membrane. Cys305 carries S-palmitoyl cysteine lipidation. Phosphothreonine occurs at positions 307, 318, and 319.

Belongs to the G-protein coupled receptor 1 family. Post-translationally, phosphorylation on Thr-318 and Thr-319 may be crucial for rapid desensitization. Phosphorylation on Thr-318 may be necessary for phosphorylation on Thr-319 to occur. Testis, particularly in spermatocytes and spermatids but not in spermatogonia. Low levels in the brain.

The protein resides in the cell membrane. Its function is as follows. Receptor for adenosine. The activity of this receptor is mediated by G proteins which inhibits adenylyl cyclase. May play a role during reproduction. The sequence is that of Adenosine receptor A3 (Adora3) from Rattus norvegicus (Rat).